A 215-amino-acid chain; its full sequence is Thiamine-phosphate synthase 1 (215 aa).

Residues 35 to 39 (QYRFE) and Asn-67 each bind 4-amino-2-methyl-5-(diphosphooxymethyl)pyrimidine. The Mg(2+) site is built by Asp-68 and Asp-87. Thr-106 contributes to the 4-amino-2-methyl-5-(diphosphooxymethyl)pyrimidine binding site. 132-134 (TST) is a binding site for 2-[(2R,5Z)-2-carboxy-4-methylthiazol-5(2H)-ylidene]ethyl phosphate. Lys-135 provides a ligand contact to 4-amino-2-methyl-5-(diphosphooxymethyl)pyrimidine. Gly-162 is a binding site for 2-[(2R,5Z)-2-carboxy-4-methylthiazol-5(2H)-ylidene]ethyl phosphate.

The protein belongs to the thiamine-phosphate synthase family. Mg(2+) serves as cofactor.

The enzyme catalyses 2-[(2R,5Z)-2-carboxy-4-methylthiazol-5(2H)-ylidene]ethyl phosphate + 4-amino-2-methyl-5-(diphosphooxymethyl)pyrimidine + 2 H(+) = thiamine phosphate + CO2 + diphosphate. The catalysed reaction is 2-(2-carboxy-4-methylthiazol-5-yl)ethyl phosphate + 4-amino-2-methyl-5-(diphosphooxymethyl)pyrimidine + 2 H(+) = thiamine phosphate + CO2 + diphosphate. It carries out the reaction 4-methyl-5-(2-phosphooxyethyl)-thiazole + 4-amino-2-methyl-5-(diphosphooxymethyl)pyrimidine + H(+) = thiamine phosphate + diphosphate. The protein operates within cofactor biosynthesis; thiamine diphosphate biosynthesis; thiamine phosphate from 4-amino-2-methyl-5-diphosphomethylpyrimidine and 4-methyl-5-(2-phosphoethyl)-thiazole: step 1/1. Functionally, condenses 4-methyl-5-(beta-hydroxyethyl)thiazole monophosphate (THZ-P) and 2-methyl-4-amino-5-hydroxymethyl pyrimidine pyrophosphate (HMP-PP) to form thiamine monophosphate (TMP). The chain is Thiamine-phosphate synthase 1 from Aquifex aeolicus (strain VF5).